The chain runs to 301 residues: Glutathione transport system permease protein GsiD (301 aa).

6 helical membrane-spanning segments follow: residues 37 to 57 (VAVA…WAQY), 103 to 123 (LAAG…LGLL), 141 to 161 (VLFA…MGSG), 162 to 182 (MANV…RLVR), 220 to 240 (IVVF…SLSF), and 264 to 284 (VIAP…VLAF). The 190-residue stretch at 99-288 (TRISLAAGIF…LTVLAFNLLG (190 aa)) folds into the ABC transmembrane type-1 domain.

This sequence belongs to the binding-protein-dependent transport system permease family. In terms of assembly, the complex is composed of two ATP-binding proteins (GsiA), two transmembrane proteins (GsiC and GsiD) and a solute-binding protein (GsiB).

It localises to the cell inner membrane. Part of the ABC transporter complex GsiABCD involved in glutathione import. Probably responsible for the translocation of the substrate across the membrane. The polypeptide is Glutathione transport system permease protein GsiD (Pectobacterium atrosepticum (strain SCRI 1043 / ATCC BAA-672) (Erwinia carotovora subsp. atroseptica)).